We begin with the raw amino-acid sequence, 390 residues long: RNA binding protein fox-1 homolog 2 (390 aa).

Residues 1–127 (MQNEPLTPGY…STPKRLHVSN (127 aa)) form a disordered region. 2 stretches are compositionally biased toward polar residues: residues 18–28 (SQGNQEPTTTP) and 65–95 (GEHN…SLTT). At H67 the chain carries Phosphothreonine. Positions 97–117 (GGAQTDGQQSQTQSSENSESK) are enriched in low complexity. The region spanning 121-197 (KRLHVSNIPF…RKIEVNNATA (77 aa)) is the RRM domain. Residues G249, G267, F268, A277, and R281 each carry the omega-N-methylarginine modification. An asymmetric dimethylarginine mark is found at R297 and R329. Residues R381 and R386 each carry the asymmetric dimethylarginine; alternate modification. 2 positions are modified to omega-N-methylarginine; alternate: R381 and R386.

In terms of assembly, interacts with ER-alpha N-terminal activation domain. Interacts with RBPMS; the interaction allows cooperative assembly of stable cell-specific alternative splicing regulatory complexes.

It localises to the nucleus. The protein localises to the cytoplasm. Functionally, RNA-binding protein that regulates alternative splicing events by binding to 5'-UGCAUGU-3' elements. Prevents binding of U2AF2 to the 3'-splice site. Regulates alternative splicing of tissue-specific exons and of differentially spliced exons during erythropoiesis. RNA-binding protein that seems to act as a coregulatory factor of ER-alpha. Together with RNA binding proteins RBPMS and MBNL1/2, activates vascular smooth muscle cells alternative splicing events. This chain is RNA binding protein fox-1 homolog 2 (RBFOX2), found in Homo sapiens (Human).